A 151-amino-acid chain; its full sequence is Ubiquitin-conjugating enzyme E2 2 (151 aa).

The region spanning 4 to 150 (AARRRLMRDF…VRETVEKSWE (147 aa)) is the UBC core domain. The active-site Glycyl thioester intermediate is C88.

It belongs to the ubiquitin-conjugating enzyme family.

It is found in the cytoplasm. Its subcellular location is the nucleus. The catalysed reaction is S-ubiquitinyl-[E1 ubiquitin-activating enzyme]-L-cysteine + [E2 ubiquitin-conjugating enzyme]-L-cysteine = [E1 ubiquitin-activating enzyme]-L-cysteine + S-ubiquitinyl-[E2 ubiquitin-conjugating enzyme]-L-cysteine.. Its pathway is protein modification; protein ubiquitination. In terms of biological role, catalyzes the covalent attachment of ubiquitin to other proteins. Plays a role in transcription regulation by catalyzing the monoubiquitination of histone H2B to form H2BK123ub1. H2BK123ub1 gives a specific tag for epigenetic transcriptional activation and is also a prerequisite for H3K4me and H3K79me formation. Also involved in postreplication repair of UV-damaged DNA, in N-end rule-dependent protein degradation and in sporulation. The protein is Ubiquitin-conjugating enzyme E2 2 (mus-8) of Neurospora crassa (strain ATCC 24698 / 74-OR23-1A / CBS 708.71 / DSM 1257 / FGSC 987).